We begin with the raw amino-acid sequence, 356 residues long: MFERLQSLDERYERLNELLSDPEVISDSNKLREYSKEQADMEETVQVYREYKTVMDQYQDAKEMLEDKLDDEMYAMVKEEIDELATRKEDLEAKLKVLLLPKDPNDDKNVIVEVRGAAGGDEAQLFAADLYKMYARYAEAQGWKIEVIEASSTELGGYKEIIFSVNGKGAYSKLKYENGAHRVQRVPQTESGGRIHTSTATVAVLPEAEEVEVDIHEKDIRVDTFASSGPGGQSVNTTMSAVRLTHLPTGIVVSCQDEKSQIKNKEKAMKVLRARIYDKFQQEAQAEYDQTRKSAVGTGDRSERIRTYNFPQSRVTDHRIGLTLQKLEQILQGKLDEIIESLIVHEQAELMKQQED.

Position 233 is an N5-methylglutamine (glutamine 233).

Belongs to the prokaryotic/mitochondrial release factor family. Methylated by PrmC. Methylation increases the termination efficiency of RF1.

The protein resides in the cytoplasm. Its function is as follows. Peptide chain release factor 1 directs the termination of translation in response to the peptide chain termination codons UAG and UAA. This is Peptide chain release factor 1 from Halalkalibacterium halodurans (strain ATCC BAA-125 / DSM 18197 / FERM 7344 / JCM 9153 / C-125) (Bacillus halodurans).